The primary structure comprises 399 residues: Phosphoglycerate kinase (399 aa).

Substrate is bound by residues 22-24, arginine 37, 60-63, arginine 118, and arginine 151; these read DFN and HFGR. ATP is bound by residues lysine 201, glutamate 322, and 352–355; that span reads GGDS.

The protein belongs to the phosphoglycerate kinase family. Monomer.

The protein localises to the cytoplasm. The catalysed reaction is (2R)-3-phosphoglycerate + ATP = (2R)-3-phospho-glyceroyl phosphate + ADP. Its pathway is carbohydrate degradation; glycolysis; pyruvate from D-glyceraldehyde 3-phosphate: step 2/5. This chain is Phosphoglycerate kinase, found in Wolbachia sp. subsp. Brugia malayi (strain TRS).